Reading from the N-terminus, the 156-residue chain is Small ribosomal subunit protein uS7 (156 aa).

This sequence belongs to the universal ribosomal protein uS7 family. In terms of assembly, part of the 30S ribosomal subunit. Contacts proteins S9 and S11.

Its function is as follows. One of the primary rRNA binding proteins, it binds directly to 16S rRNA where it nucleates assembly of the head domain of the 30S subunit. Is located at the subunit interface close to the decoding center, probably blocks exit of the E-site tRNA. The sequence is that of Small ribosomal subunit protein uS7 from Mycoplasmopsis pulmonis (strain UAB CTIP) (Mycoplasma pulmonis).